Reading from the N-terminus, the 145-residue chain is MRHRKQGRKFGRTSSHRKAMFKNMSASLINHELIKTTLPKAKELRAIVEPLVTLAKREHKLRQELDTNSNEFKAQSVALRRQAFDFLRNKAAVTKLFEEFGARYAERAGGYTRILKCGYRFGDKAPMAFIELVDRPQVEEAADEE.

This sequence belongs to the bacterial ribosomal protein bL17 family. In terms of assembly, part of the 50S ribosomal subunit. Contacts protein L32.

The sequence is that of Large ribosomal subunit protein bL17 from Francisella tularensis subsp. tularensis (strain FSC 198).